Consider the following 217-residue polypeptide: 3-dehydroquinate dehydratase (217 aa).

Residues 26–28 (EFR) and Arg59 contribute to the 3-dehydroquinate site. His114 functions as the Proton donor/acceptor in the catalytic mechanism. Lys140 acts as the Schiff-base intermediate with substrate in catalysis. 3-dehydroquinate contacts are provided by Arg178 and Gln201.

Belongs to the type-I 3-dehydroquinase family. As to quaternary structure, homodimer.

The enzyme catalyses 3-dehydroquinate = 3-dehydroshikimate + H2O. It functions in the pathway metabolic intermediate biosynthesis; chorismate biosynthesis; chorismate from D-erythrose 4-phosphate and phosphoenolpyruvate: step 3/7. Functionally, involved in the third step of the chorismate pathway, which leads to the biosynthesis of aromatic amino acids. Catalyzes the cis-dehydration of 3-dehydroquinate (DHQ) and introduces the first double bond of the aromatic ring to yield 3-dehydroshikimate. This is 3-dehydroquinate dehydratase from Hydrogenobaculum sp. (strain Y04AAS1).